Here is a 132-residue protein sequence, read N- to C-terminus: ATP synthase epsilon chain (132 aa).

Belongs to the ATPase epsilon chain family. As to quaternary structure, F-type ATPases have 2 components, CF(1) - the catalytic core - and CF(0) - the membrane proton channel. CF(1) has five subunits: alpha(3), beta(3), gamma(1), delta(1), epsilon(1). CF(0) has three main subunits: a, b and c.

It is found in the cell membrane. Functionally, produces ATP from ADP in the presence of a proton gradient across the membrane. This is ATP synthase epsilon chain from Bacillus velezensis (strain DSM 23117 / BGSC 10A6 / LMG 26770 / FZB42) (Bacillus amyloliquefaciens subsp. plantarum).